The chain runs to 419 residues: AT-hook motif nuclear-localized protein 4 (419 aa).

3 disordered regions span residues 1 to 168, 301 to 337, and 382 to 419; these read MEER…SGGG, QQQQ…DPKA, and DLFS…EVPS. The Bipartite nuclear localization signal signature appears at 78–86; that stretch reads KKKRGRPRK. A DNA-binding region (a.T hook) is located at residues 78–90; that stretch reads KKKRGRPRKYNPD. The span at 101–112 shows a compositional bias: polar residues; the sequence is PISSSVPLTSEF. A compositionally biased stretch (basic residues) spans 115–130; that stretch reads RKRGRGRGRGRGRGRG. Residues 136 to 148 are compositionally biased toward low complexity; that stretch reads GSREPNNNNNDNN. Residues 174-314 enclose the PPC domain; it reads VSPSFTPHVL…QQIKKQRRER (141 aa). Residues 318–328 are compositionally biased toward polar residues; sequence PTTTQASNISF. Acidic residues predominate over residues 391–406; the sequence is DREEDEDDLEGEDDEE.

As to quaternary structure, homodimer. Interacts with AHL3. Predominantly expressed in the stele of the root meristem with a specificity to the procambium.

It is found in the nucleus. In terms of biological role, transcription factor that specifically binds AT-rich DNA sequences related to the nuclear matrix attachment regions (MARs). Acts redundantly with AHL3 to regulate the formation of tissue boundary between the xylem and procambium in the root meristem. Cell-to-cell movement of AHL4 from the procambium to the xylem is critical for its function in root vascular patterning. The sequence is that of AT-hook motif nuclear-localized protein 4 from Arabidopsis thaliana (Mouse-ear cress).